The sequence spans 93 residues: Long neurotoxin 1 (93 aa).

The N-terminal stretch at 1–21 is a signal peptide; sequence MKTLLLTLVVVTIVCLDLGNS. 5 cysteine pairs are disulfide-bonded: C24–C42, C35–C63, C48–C52, C67–C78, and C79–C84.

It belongs to the three-finger toxin family. Long-chain subfamily. Type II alpha-neurotoxin sub-subfamily. Expressed by the venom gland.

The protein localises to the secreted. In terms of biological role, binds with high affinity to muscular (alpha-1/CHRNA1) and neuronal (alpha-7/CHRNA7) nicotinic acetylcholine receptor (nAChR) and inhibits acetylcholine from binding to the receptor, thereby impairing neuromuscular and neuronal transmission. The polypeptide is Long neurotoxin 1 (Tropidechis carinatus (Australian rough-scaled snake)).